A 397-amino-acid polypeptide reads, in one-letter code: Phosphoglycerate kinase (397 aa).

Residues 25-27 (DLN), Arg41, 64-67 (HLGR), Arg118, and Arg151 contribute to the substrate site. ATP-binding positions include Lys202, Glu324, and 350 to 353 (GGDT).

This sequence belongs to the phosphoglycerate kinase family. As to quaternary structure, monomer.

Its subcellular location is the cytoplasm. The enzyme catalyses (2R)-3-phosphoglycerate + ATP = (2R)-3-phospho-glyceroyl phosphate + ADP. The protein operates within carbohydrate degradation; glycolysis; pyruvate from D-glyceraldehyde 3-phosphate: step 2/5. The chain is Phosphoglycerate kinase from Herminiimonas arsenicoxydans.